A 224-amino-acid polypeptide reads, in one-letter code: UPF0758 protein VV1_0825 (224 aa).

Residues 1–20 are disordered; it reads MSLKNLPSESMPREKLLQRG. In terms of domain architecture, MPN spans 102–224; the sequence is ALTSPQHTKL…VVSFAERGWI (123 aa). Zn(2+) is bound by residues histidine 173, histidine 175, and aspartate 186. The JAMM motif motif lies at 173–186; the sequence is HNHPSGVAEPSQAD.

The protein belongs to the UPF0758 family.

The protein is UPF0758 protein VV1_0825 of Vibrio vulnificus (strain CMCP6).